Consider the following 461-residue polypeptide: Serine/threonine-protein kinase 4 homolog A (461 aa).

A Protein kinase domain is found at 20 to 273; it reads FTIVEKLGEG…AEELLKHPFI (254 aa). ATP contacts are provided by residues 26-34 and K49; that span reads LGEGSYGSV. The active-site Proton acceptor is the D139. A Phosphothreonine; by autocatalysis modification is found at T173. Disordered regions lie at residues 303–349 and 369–388; these read GIEQ…EEYD and NDDE…SNKK. Positions 307–322 are enriched in acidic residues; the sequence is RDEEEEDEDEDSEDSD. In terms of domain architecture, SARAH spans 411–458; sequence SDKYSSYSLEELKKMLAELEIEREKEVQKTLEKFSINRQALLAVIDEK.

Belongs to the protein kinase superfamily. STE Ser/Thr protein kinase family. STE20 subfamily. The cofactor is Mn(2+). Post-translationally, undergoes autophosphorylation in the catalytic domain.

The protein localises to the cytoplasm. It localises to the cytosol. The catalysed reaction is L-seryl-[protein] + ATP = O-phospho-L-seryl-[protein] + ADP + H(+). It catalyses the reaction L-threonyl-[protein] + ATP = O-phospho-L-threonyl-[protein] + ADP + H(+). In terms of biological role, regulates both cAMP signaling during early development and the stress response. Functions as an activator of adenylylcyclase. The sequence is that of Serine/threonine-protein kinase 4 homolog A (krsA) from Dictyostelium discoideum (Social amoeba).